The primary structure comprises 75 residues: Translation initiation factor IF-1, chloroplastic (75 aa).

The protein belongs to the IF-1 family. Component of the 30S ribosomal translation pre-initiation complex which assembles on the 30S ribosome in the order IF-2 and IF-3, IF-1 and N-formylmethionyl-tRNA(fMet); mRNA recruitment can occur at any time during PIC assembly.

Its subcellular location is the plastid. It is found in the chloroplast. In terms of biological role, one of the essential components for the initiation of protein synthesis. Stabilizes the binding of IF-2 and IF-3 on the 30S subunit to which N-formylmethionyl-tRNA(fMet) subsequently binds. Helps modulate mRNA selection, yielding the 30S pre-initiation complex (PIC). Upon addition of the 50S ribosomal subunit IF-1, IF-2 and IF-3 are released leaving the mature 70S translation initiation complex. The chain is Translation initiation factor IF-1, chloroplastic (infA) from Cucumis sativus (Cucumber).